Consider the following 795-residue polypeptide: Glutamine--tRNA ligase, cytoplasmic (795 aa).

The interval 188-220 (ADNEKPTKKKEKKEKPAKVEEKKAVVETTAEPS) is disordered. Over residues 200 to 212 (KEKPAKVEEKKAV) the composition is skewed to basic and acidic residues. The 'HIGH' region motif lies at 277-287 (PEPNGYLHIGH). ATP contacts are provided by residues 278–280 (EPN) and 284–290 (HIGHAKA). 2 residues coordinate L-glutamine: Asp-310 and Tyr-450. Residues Thr-469, 498–499 (RL), and 506–508 (MSK) each bind ATP. A 'KMSKS' region motif is present at residues 505–509 (VMSKR).

Belongs to the class-I aminoacyl-tRNA synthetase family.

Its subcellular location is the cytoplasm. It is found in the cytosol. It carries out the reaction tRNA(Gln) + L-glutamine + ATP = L-glutaminyl-tRNA(Gln) + AMP + diphosphate. The sequence is that of Glutamine--tRNA ligase, cytoplasmic from Arabidopsis thaliana (Mouse-ear cress).